We begin with the raw amino-acid sequence, 446 residues long: Neuropeptide Y receptor type 5 (446 aa).

The Extracellular segment spans residues 1 to 42 (MDLELQDFYNKTLATENNTAATRNSDFPVWDDYKSSVDDLQY). N-linked (GlcNAc...) asparagine glycosylation is found at N10 and N17. Residues 43 to 63 (FLIGLYTFVSLLGFMGNLLIL) form a helical membrane-spanning segment. Residues 64–77 (MALMRKRNQKTMVN) lie on the Cytoplasmic side of the membrane. A helical membrane pass occupies residues 78-98 (FLIGNLAFSDILVVLFCSPFT). At 99-117 (LTSVLLDQWMFGKVMCHIM) the chain is on the extracellular side. The cysteines at positions 114 and 198 are disulfide-linked. A helical transmembrane segment spans residues 118–138 (PFLQCVSVLVSTLILISIAIV). At 139-156 (RYHMIKHPISNNLTANHG) the chain is on the cytoplasmic side. A helical membrane pass occupies residues 157–177 (YFLIATVWTLGFAICSPLPVF). The Extracellular segment spans residues 178 to 208 (HSLVELQETFDSALLSSRYLCVESWPSDSYR). Residues 209 to 229 (IAFTISLLLVQYILPLVCLTV) form a helical membrane-spanning segment. Residues 230–369 (SHTSVCRSIS…KKRSRSVFYR (140 aa)) lie on the Cytoplasmic side of the membrane. The helical transmembrane segment at 370 to 390 (LTILILVFAVSWMPLHLFHVV) threads the bilayer. Residues 391 to 407 (TDFNDNLISNRHFKLVY) are Extracellular-facing. The helical transmembrane segment at 408–428 (CICHLLGMMSCCLNPILYGFL) threads the bilayer. At 429-446 (NNGIKADLISLIQCLHMS) the chain is on the cytoplasmic side. Residue C442 is the site of S-palmitoyl cysteine attachment.

This sequence belongs to the G-protein coupled receptor 1 family.

It localises to the cell membrane. Receptor for neuropeptide Y and peptide YY. The activity of this receptor is mediated by G proteins that inhibit adenylate cyclase activity. Seems to be associated with food intake. Could be involved in feeding disorders. This is Neuropeptide Y receptor type 5 (NPY5R) from Canis lupus familiaris (Dog).